Reading from the N-terminus, the 456-residue chain is MKLWGGRFEKDTDREMRDFHASIHFDWRLYEEDIRGSIAHVTMLARQGIITNEEKEKIIGALTEILEEIKAGKVDFSPEAEDIHLNIETLLIKKIGDVGKKVHTGRSRNDQVALDTRLYVKKEGTAIIALIKELQETLINLAEGHLNTIMPGYTHLQRAQPVTLAHHLLAYFWMFDRDRSRFYDCLKRADRSPLGAGALAGTTLPLDREFVSELLGFNGVCENSLDAVSDRDYILEFLFAAATTMMHLSRFSEEIVLWNSKEFSFVEIDDRYATGSSMMPQKKNPDAAELIRGKTGRVYGNLMAVLTMMKGLPLAYNKDMQEDKEPLFDTVDTLKGSLRVFTGMLKTIKFNQGAMYKAALKGFLNATDLAEYLVEKGVPFREAHRITGELVLKAEKTGRELLELSLDELKEMSPLIEEDIYEKLKIENVLAKRKLFGGPAPQAVIEQLRQAREALA.

It belongs to the lyase 1 family. Argininosuccinate lyase subfamily.

It is found in the cytoplasm. The catalysed reaction is 2-(N(omega)-L-arginino)succinate = fumarate + L-arginine. It functions in the pathway amino-acid biosynthesis; L-arginine biosynthesis; L-arginine from L-ornithine and carbamoyl phosphate: step 3/3. This is Argininosuccinate lyase from Carboxydothermus hydrogenoformans (strain ATCC BAA-161 / DSM 6008 / Z-2901).